A 310-amino-acid polypeptide reads, in one-letter code: Homoserine kinase (310 aa).

91 to 101 (PIGSGLGSSAC) is a binding site for ATP.

The protein belongs to the GHMP kinase family. Homoserine kinase subfamily.

Its subcellular location is the cytoplasm. The enzyme catalyses L-homoserine + ATP = O-phospho-L-homoserine + ADP + H(+). It participates in amino-acid biosynthesis; L-threonine biosynthesis; L-threonine from L-aspartate: step 4/5. Functionally, catalyzes the ATP-dependent phosphorylation of L-homoserine to L-homoserine phosphate. The chain is Homoserine kinase from Escherichia coli O17:K52:H18 (strain UMN026 / ExPEC).